A 539-amino-acid polypeptide reads, in one-letter code: Dopamine receptor 2 (539 aa).

Residues 1 to 113 (MVDDNGSSPE…LPNDRVGLLA (113 aa)) are Extracellular-facing. N-linked (GlcNAc...) asparagine glycans are attached at residues N5, N31, N47, and N68. Residues 114–134 (FLFLFSFATVFGNSLVILAVI) traverse the membrane as a helical segment. The Cytoplasmic segment spans residues 135 to 145 (RERYLHTATNY). The chain crosses the membrane as a helical span at residues 146–166 (FITSLAVADCLVGLVVMPFSA). Topologically, residues 167 to 189 (LYEVLENTWFFGTDWCDIWRSLD) are extracellular. A disulfide bridge links C182 with C261. Residues 190-206 (VLFSTASILNLCVISLD) form a helical membrane-spanning segment. Residues 207–227 (RYWAITDPFSYPMRMTVKRAA) are Cytoplasmic-facing. Residues 228–248 (GLIAAVWICSSAISFPAIVWW) form a helical membrane-spanning segment. Over 249–266 (RAARDGEMPAYKCTFTEH) the chain is Extracellular. The chain crosses the membrane as a helical span at residues 267 to 287 (LGYLVFSSTISFYLPLLVMVF). Residues 288-420 (TYCRIYRAAV…FAKEKKAAKT (133 aa)) lie on the Cytoplasmic side of the membrane. Positions 326–387 (GGTTRDQQNQ…EPDDEPLSAL (62 aa)) are disordered. Gly residues predominate over residues 337–352 (SGGGGGGGGGGGGGGS). Positions 356–367 (SHSHSHHHHHNH) are enriched in basic residues. Residues 421-441 (LGIVMGVFIICWLPFFVVNLL) form a helical membrane-spanning segment. At 442 to 453 (SGFCIECIEHEE) the chain is on the extracellular side. A helical transmembrane segment spans residues 454–474 (IVSAIVTWLGWINSCMNPVIY). Over 475–539 (ACWSRDFRRA…RHNSCEQTYI (65 aa)) the chain is Cytoplasmic. 2 S-palmitoyl cysteine lipidation sites follow: C492 and C493.

It belongs to the G-protein coupled receptor 1 family. As to expression, expressed in both central and peripheral nervous systems.

It localises to the cell membrane. Receptor for dopamine. The activity of this receptor is mediated by G proteins which activate adenylyl cyclase. Also capable of generating a calcium signal. In terms of antagonist responses, would be classed with the D1-like dopamine receptor group. This receptor is an attractive candidate for initiating biochemical cascades underlying olfactory learning. The sequence is that of Dopamine receptor 2 (Dop1R2) from Drosophila melanogaster (Fruit fly).